The primary structure comprises 76 residues: KANTR integral membrane protein (76 aa).

An N-terminal signal peptide occupies residues 1–25 (MSPFSLLILVICAFSLFFLINLSRG). The Extracellular segment spans residues 26-34 (LSILLVFTK). Residues 35–55 (NQLLALLLLSIVSLFSISLIS) traverse the membrane as a helical segment. Over 56–76 (ALIFFDLLPSTFFGFILLLFF) the chain is Cytoplasmic.

Its subcellular location is the membrane. The polypeptide is KANTR integral membrane protein (Mus musculus (Mouse)).